We begin with the raw amino-acid sequence, 360 residues long: Outer mitochondrial transmembrane helix translocase (360 aa).

At 1–15 (MVHGEAFSRPLSRNE) the chain is on the mitochondrial intermembrane side. The helical transmembrane segment at 16–34 (VVGLIFRLTIFGAVTYFTI) threads the bilayer. The Cytoplasmic portion of the chain corresponds to 35-360 (KWMVDAIDPT…QNVLMHVSLD (326 aa)). 133-140 (GPPGCGKT) is an ATP binding site.

The protein belongs to the AAA ATPase family. MSP1 subfamily.

The protein localises to the mitochondrion outer membrane. The protein resides in the peroxisome membrane. It is found in the postsynaptic cell membrane. It carries out the reaction [protein]-with a C-terminal TM segment(out) + ATP + H2O = [protein]-with a C-terminal TM segment(in) + ADP + phosphate + H(+). In terms of biological role, outer mitochondrial translocase required to remove mislocalized tail-anchored transmembrane proteins on mitochondria. Specifically recognizes and binds tail-anchored transmembrane proteins: acts as a dislocase that mediates the ATP-dependent extraction of mistargeted tail-anchored transmembrane proteins from the mitochondrion outer membrane. Also plays a critical role in regulating the surface expression of AMPA receptors (AMPAR), thereby regulating synaptic plasticity and learning and memory. This chain is Outer mitochondrial transmembrane helix translocase, found in Xenopus tropicalis (Western clawed frog).